The sequence spans 440 residues: NADH-quinone oxidoreductase subunit D 1 (440 aa).

Belongs to the complex I 49 kDa subunit family. NDH-1 is composed of 14 different subunits. Subunits NuoB, C, D, E, F, and G constitute the peripheral sector of the complex.

It localises to the cell inner membrane. It catalyses the reaction a quinone + NADH + 5 H(+)(in) = a quinol + NAD(+) + 4 H(+)(out). Functionally, NDH-1 shuttles electrons from NADH, via FMN and iron-sulfur (Fe-S) centers, to quinones in the respiratory chain. The immediate electron acceptor for the enzyme in this species is believed to be a menaquinone. Couples the redox reaction to proton translocation (for every two electrons transferred, four hydrogen ions are translocated across the cytoplasmic membrane), and thus conserves the redox energy in a proton gradient. In Chloroherpeton thalassium (strain ATCC 35110 / GB-78), this protein is NADH-quinone oxidoreductase subunit D 1.